A 445-amino-acid polypeptide reads, in one-letter code: Argininosuccinate synthase (445 aa).

ATP is bound by residues 17-25 (AFSGGLDTS) and Ala43. Residue Tyr99 coordinates L-citrulline. The ATP site is built by Gly129 and Thr131. Residues Thr131, Asn135, and Asp136 each contribute to the L-aspartate site. Position 135 (Asn135) interacts with L-citrulline. Asp136 lines the ATP pocket. Residues Arg139 and Ser192 each contribute to the L-citrulline site. Asp194 provides a ligand contact to ATP. 3 residues coordinate L-citrulline: Thr201, Glu203, and Glu280.

It belongs to the argininosuccinate synthase family. Type 2 subfamily. Homotetramer.

Its subcellular location is the cytoplasm. The catalysed reaction is L-citrulline + L-aspartate + ATP = 2-(N(omega)-L-arginino)succinate + AMP + diphosphate + H(+). It participates in amino-acid biosynthesis; L-arginine biosynthesis; L-arginine from L-ornithine and carbamoyl phosphate: step 2/3. The chain is Argininosuccinate synthase from Polaromonas naphthalenivorans (strain CJ2).